A 565-amino-acid chain; its full sequence is MAKTTKVKGNKKKSDTSKVVSKVSRKRSHEDSESEVEDNEKVVEELDADFDEVAGLLGDDIEDPESKSQSKKEKQKAKDEAKLEQLTKPQVSNEVPDNDNDDDSSEDVLFENADFSEPTMKAIKEMGFTKMTKVQAKTIPPLLAGRDVLGAAKTGSGKTLAFLIPAIELLYSLKIKPRNGTAVIIITPTRELALQIFGVARELMQFHSQTCGIVIGGADRRQEATKLAKGVNLLVATPGRLLDHLKNTQFVFSNLKALVIDEADRILEIGFEDEMKQIIKVLPNENRQSMLFSATQTTKVEDLARISLRPGPLYINVVPEKDVSTADGLEQGYVVCDSDKRFLLLFSFLKRNVKKKIIVFLSSCNSVKFYSELLNYIDLPVLDLHGKQKQQKRTNTFFEFCNAKQGILVCTDVAARGLDIPAVDWIVQFDPPDDPRDYIHRVGRTARGTQGKGKSLMFLTPSELGFLRYLKAAKVPLNEYEFPANKIANIQSQLTKLIKTNYLLNQSAKDGYRAYLQAYASHGLKTVYQIDKLDLKKVSASFGLDQVPRVNLSIGGTKTKKQKRS.

A compositionally biased stretch (basic residues) spans 1 to 11; it reads MAKTTKVKGNK. The tract at residues 1–106 is disordered; it reads MAKTTKVKGN…DNDNDDDSSE (106 aa). Residues 26-85 adopt a coiled-coil conformation; sequence KRSHEDSESEVEDNEKVVEELDADFDEVAGLLGDDIEDPESKSQSKKEKQKAKDEAKLEQ. The segment covering 64–85 has biased composition (basic and acidic residues); the sequence is PESKSQSKKEKQKAKDEAKLEQ. A compositionally biased stretch (acidic residues) spans 96 to 106; sequence PDNDNDDDSSE. A Q motif motif is present at residues 108-136; that stretch reads VLFENADFSEPTMKAIKEMGFTKMTKVQA. Residues 139–314 form the Helicase ATP-binding domain; the sequence is IPPLLAGRDV…RISLRPGPLY (176 aa). ATP is bound at residue 152–159; sequence AKTGSGKT. The DEAD box motif lies at 261–264; it reads DEAD. Residues 328–498 enclose the Helicase C-terminal domain; sequence GLEQGYVVCD…NIQSQLTKLI (171 aa). Residues 340 to 356 carry the Bipartite nuclear localization signal motif; that stretch reads KRFLLLFSFLKRNVKKK.

Belongs to the DEAD box helicase family. DDX18/HAS1 subfamily. As to quaternary structure, associates in the nucleolus with the 60S and pre-60S ribosomal subunits.

The protein localises to the nucleus. The protein resides in the nucleolus. It catalyses the reaction ATP + H2O = ADP + phosphate + H(+). In terms of biological role, ATP-dependent RNA helicase involved in 40S ribosomal subunit biogenesis. Required for the processing and cleavage of 35S pre-rRNA at sites A0, A1, and A2, leading to mature 18S rRNA. This chain is ATP-dependent RNA helicase HAS1 (HAS1), found in Candida albicans (strain SC5314 / ATCC MYA-2876) (Yeast).